The following is a 223-amino-acid chain: Small ribosomal subunit protein uS3 (223 aa).

A KH type-2 domain is found at 39-107 (VREFLHKKLA…PVQINIEEVR (69 aa)).

This sequence belongs to the universal ribosomal protein uS3 family. Part of the 30S ribosomal subunit. Forms a tight complex with proteins S10 and S14.

Its function is as follows. Binds the lower part of the 30S subunit head. Binds mRNA in the 70S ribosome, positioning it for translation. The protein is Small ribosomal subunit protein uS3 of Francisella tularensis subsp. holarctica (strain FTNF002-00 / FTA).